Here is a 529-residue protein sequence, read N- to C-terminus: Probable biotin-dependent acyl-coenzyme A carboxylase beta2 subunit (529 aa).

Residues 20-271 (MSGKLDEINA…IKQGPAPAPV (252 aa)) enclose the CoA carboxyltransferase N-terminal domain. The region spanning 270–520 (PVTEPLFDAE…SAIANGPIKG (251 aa)) is the CoA carboxyltransferase C-terminal domain.

Belongs to the AccD/PCCB family. The biotin-dependent acyl-CoA carboxylase complex is composed of an AccA protein, which contains the biotin carboxylase (BC) and biotin carboxyl carrier protein (BCCP) domains, and an AccD protein, which contains the carboxyl transferase (CT) domain.

In terms of biological role, component of a biotin-dependent acyl-CoA carboxylase complex. This subunit transfers the CO2 from carboxybiotin to the CoA ester substrate. The polypeptide is Probable biotin-dependent acyl-coenzyme A carboxylase beta2 subunit (accD2) (Mycobacterium tuberculosis (strain ATCC 25618 / H37Rv)).